The chain runs to 325 residues: dITP/XTP pyrophosphatase (325 aa).

Residues 1–128 form a unknown region; sequence MKEKIYEYKD…KKVSELGDTI (128 aa). The NTP pyrophosphatase stretch occupies residues 129-324; that stretch reads LIATRNEGKT…MEVFPAWQNA (196 aa). 132–137 contacts substrate; sequence TRNEGK. E165 and D194 together coordinate Mg(2+). D194 functions as the Proton acceptor in the catalytic mechanism. Substrate-binding positions include S195, 278 to 281, K301, and 306 to 307; these read FGYD and HR.

It belongs to the HAM1 NTPase family. In terms of assembly, homodimer. Mg(2+) is required as a cofactor.

It carries out the reaction XTP + H2O = XMP + diphosphate + H(+). It catalyses the reaction dITP + H2O = dIMP + diphosphate + H(+). The enzyme catalyses ITP + H2O = IMP + diphosphate + H(+). Pyrophosphatase that catalyzes the hydrolysis of nucleoside triphosphates to their monophosphate derivatives, with a high preference for the non-canonical purine nucleotides XTP (xanthosine triphosphate), dITP (deoxyinosine triphosphate) and ITP. Seems to function as a house-cleaning enzyme that removes non-canonical purine nucleotides from the nucleotide pool, thus preventing their incorporation into DNA/RNA and avoiding chromosomal lesions. In Streptococcus mutans serotype c (strain ATCC 700610 / UA159), this protein is dITP/XTP pyrophosphatase.